A 213-amino-acid polypeptide reads, in one-letter code: Ribonuclease T (213 aa).

Residues V28 to F202 form the Exonuclease domain. Residues D31, E33, H189, and D194 each coordinate Mg(2+). H189 acts as the Proton donor/acceptor in catalysis.

Belongs to the RNase T family. Homodimer. The cofactor is Mg(2+).

Its function is as follows. Trims short 3' overhangs of a variety of RNA species, leaving a one or two nucleotide 3' overhang. Responsible for the end-turnover of tRNA: specifically removes the terminal AMP residue from uncharged tRNA (tRNA-C-C-A). Also appears to be involved in tRNA biosynthesis. This chain is Ribonuclease T, found in Xanthomonas euvesicatoria pv. vesicatoria (strain 85-10) (Xanthomonas campestris pv. vesicatoria).